A 150-amino-acid chain; its full sequence is UPF0756 membrane protein YPN_1328 (150 aa).

Helical transmembrane passes span 16 to 36, 51 to 71, 88 to 108, and 114 to 134; these read ALGILSHNMTVTLAILILIAI, YGLTIGVLILTIGVMAPIASG, ILAIVVGVAVSWLGGRGVSLM, and VVAGLLVGTVLGVALFKGVPV.

This sequence belongs to the UPF0756 family.

The protein resides in the cell membrane. This Yersinia pestis bv. Antiqua (strain Nepal516) protein is UPF0756 membrane protein YPN_1328.